Here is a 449-residue protein sequence, read N- to C-terminus: Ribulose bisphosphate carboxylase large chain (449 aa).

Lys-7 is subject to N6,N6,N6-trimethyllysine. Asn-116 and Thr-166 together coordinate substrate. Residue Lys-168 is the Proton acceptor of the active site. Lys-170 provides a ligand contact to substrate. Residues Lys-194, Asp-196, and Glu-197 each coordinate Mg(2+). N6-carboxylysine is present on Lys-194. His-287 serves as the catalytic Proton acceptor. Residues Arg-288, His-320, and Ser-372 each coordinate substrate.

It belongs to the RuBisCO large chain family. Type I subfamily. In terms of assembly, heterohexadecamer of 8 large chains and 8 small chains; disulfide-linked. The disulfide link is formed within the large subunit homodimers. The cofactor is Mg(2+). The disulfide bond which can form in the large chain dimeric partners within the hexadecamer appears to be associated with oxidative stress and protein turnover.

It localises to the plastid. Its subcellular location is the chloroplast. It catalyses the reaction 2 (2R)-3-phosphoglycerate + 2 H(+) = D-ribulose 1,5-bisphosphate + CO2 + H2O. It carries out the reaction D-ribulose 1,5-bisphosphate + O2 = 2-phosphoglycolate + (2R)-3-phosphoglycerate + 2 H(+). Functionally, ruBisCO catalyzes two reactions: the carboxylation of D-ribulose 1,5-bisphosphate, the primary event in carbon dioxide fixation, as well as the oxidative fragmentation of the pentose substrate in the photorespiration process. Both reactions occur simultaneously and in competition at the same active site. The polypeptide is Ribulose bisphosphate carboxylase large chain (Aspidistra elatior (Cast-iron plant)).